A 198-amino-acid polypeptide reads, in one-letter code: ATP-dependent Clp protease proteolytic subunit (198 aa).

Residue Ser98 is the Nucleophile of the active site. The active site involves His123.

This sequence belongs to the peptidase S14 family. Fourteen ClpP subunits assemble into 2 heptameric rings which stack back to back to give a disk-like structure with a central cavity, resembling the structure of eukaryotic proteasomes.

The protein localises to the cytoplasm. It carries out the reaction Hydrolysis of proteins to small peptides in the presence of ATP and magnesium. alpha-casein is the usual test substrate. In the absence of ATP, only oligopeptides shorter than five residues are hydrolyzed (such as succinyl-Leu-Tyr-|-NHMec, and Leu-Tyr-Leu-|-Tyr-Trp, in which cleavage of the -Tyr-|-Leu- and -Tyr-|-Trp bonds also occurs).. Cleaves peptides in various proteins in a process that requires ATP hydrolysis. Has a chymotrypsin-like activity. Plays a major role in the degradation of misfolded proteins. This chain is ATP-dependent Clp protease proteolytic subunit, found in Levilactobacillus brevis (strain ATCC 367 / BCRC 12310 / CIP 105137 / JCM 1170 / LMG 11437 / NCIMB 947 / NCTC 947) (Lactobacillus brevis).